The primary structure comprises 168 residues: uncharacterized protein (168 aa).

A signal peptide (or 19) is located at residues 1 to 21 (MKLLKALAVLSLATISSHSFA).

This is an uncharacterized protein from Haemophilus influenzae (strain ATCC 51907 / DSM 11121 / KW20 / Rd).